Consider the following 316-residue polypeptide: Pantothenate kinase (316 aa).

An ATP-binding site is contributed by 95–102 (GSVAVGKS).

This sequence belongs to the prokaryotic pantothenate kinase family.

It is found in the cytoplasm. The enzyme catalyses (R)-pantothenate + ATP = (R)-4'-phosphopantothenate + ADP + H(+). The protein operates within cofactor biosynthesis; coenzyme A biosynthesis; CoA from (R)-pantothenate: step 1/5. The protein is Pantothenate kinase of Shewanella sp. (strain MR-7).